A 741-amino-acid polypeptide reads, in one-letter code: Transketolase, chloroplastic (741 aa).

Residues 1–67 (MASSSSLTLS…TKQQFSVRAS (67 aa)) constitute a chloroplast transit peptide. His103 contributes to the substrate binding site. Thiamine diphosphate is bound by residues His143 and 192-194 (GPL). Asp233 provides a ligand contact to Mg(2+). Thiamine diphosphate is bound by residues Gly234 and Asn263. Mg(2+) is bound by residues Asn263 and Ile265. Substrate contacts are provided by His340, Arg434, and Ser461. His340 is a binding site for thiamine diphosphate. Glu488 and Phe515 together coordinate thiamine diphosphate. Glu488 functions as the Proton donor in the catalytic mechanism. 3 residues coordinate substrate: His539, Asp547, and Arg598.

The protein belongs to the transketolase family. As to quaternary structure, homodimer. Requires Mg(2+) as cofactor. Ca(2+) serves as cofactor. The cofactor is Mn(2+). It depends on Co(2+) as a cofactor. Thiamine diphosphate is required as a cofactor.

Its subcellular location is the plastid. The protein localises to the chloroplast thylakoid membrane. It catalyses the reaction D-sedoheptulose 7-phosphate + D-glyceraldehyde 3-phosphate = aldehydo-D-ribose 5-phosphate + D-xylulose 5-phosphate. The protein operates within carbohydrate biosynthesis; Calvin cycle. Catalyzes the reversible transfer of a two-carbon ketol group from fructose-6-phosphate or sedoheptulose-7-phosphate to glyceraldehyde-3-phosphate to yield xylulose-5-phosphate and erythrose-4-phosphate or ribose-5-phosphate, respectively. This is Transketolase, chloroplastic from Solanum tuberosum (Potato).